The following is a 65-amino-acid chain: Prokaryotic ubiquitin-like protein Pup (65 aa).

Over residues 1 to 14 the composition is skewed to basic and acidic residues; that stretch reads MSGHEQQRPSRREE. A disordered region spans residues 1 to 35; it reads MSGHEQQRPSRREEDVEETPVVPAQAGAQAKESDA. An ARC ATPase binding region spans residues 21-59; it reads VVPAQAGAQAKESDADVDALLDEIDEVLESNSEEFVRGF. Positions 26-49 form a coiled coil; the sequence is AGAQAKESDADVDALLDEIDEVLE. A Deamidated glutamine modification is found at Q65. Q65 is covalently cross-linked (Isoglutamyl lysine isopeptide (Gln-Lys) (interchain with K-? in acceptor proteins)).

The protein belongs to the prokaryotic ubiquitin-like protein family. As to quaternary structure, strongly interacts with the proteasome-associated ATPase ARC through a hydrophobic interface; the interacting region of Pup lies in its C-terminal half. There is one Pup binding site per ARC hexamer ring. Is modified by deamidation of its C-terminal glutamine to glutamate by the deamidase Dop, a prerequisite to the subsequent pupylation process.

Its pathway is protein degradation; proteasomal Pup-dependent pathway. Functionally, protein modifier that is covalently attached to lysine residues of substrate proteins, thereby targeting them for proteasomal degradation. The tagging system is termed pupylation. The polypeptide is Prokaryotic ubiquitin-like protein Pup (Kineococcus radiotolerans (strain ATCC BAA-149 / DSM 14245 / SRS30216)).